Reading from the N-terminus, the 181-residue chain is Putative poly [ADP-ribose] polymerase-like 100L (181 aa).

The PARP catalytic domain occupies 1–181; it reads MDNLKEEETN…KIKYIIHITK (181 aa).

It carries out the reaction NAD(+) + (ADP-D-ribosyl)n-acceptor = nicotinamide + (ADP-D-ribosyl)n+1-acceptor + H(+).. In Invertebrate iridescent virus 6 (IIV-6), this protein is Putative poly [ADP-ribose] polymerase-like 100L.